The primary structure comprises 418 residues: Glutamyl-tRNA reductase (418 aa).

Substrate-binding positions include T49–R52, S109, E114–Q116, and Q120. C50 serves as the catalytic Nucleophile. Position 189 to 194 (G189 to I194) interacts with NADP(+).

Belongs to the glutamyl-tRNA reductase family. As to quaternary structure, homodimer.

It catalyses the reaction (S)-4-amino-5-oxopentanoate + tRNA(Glu) + NADP(+) = L-glutamyl-tRNA(Glu) + NADPH + H(+). The protein operates within porphyrin-containing compound metabolism; protoporphyrin-IX biosynthesis; 5-aminolevulinate from L-glutamyl-tRNA(Glu): step 1/2. Its function is as follows. Catalyzes the NADPH-dependent reduction of glutamyl-tRNA(Glu) to glutamate 1-semialdehyde (GSA). The chain is Glutamyl-tRNA reductase from Shigella dysenteriae serotype 1 (strain Sd197).